Consider the following 101-residue polypeptide: NADH-quinone oxidoreductase subunit K (101 aa).

3 helical membrane passes run 4-24 (LAHFLVLGAILFAISIVGIFL), 30-50 (IVLLMAIELMLLAVNMNFVAF), and 61-81 (VFVFFILTVAAAESAIGLAIL).

Belongs to the complex I subunit 4L family. In terms of assembly, NDH-1 is composed of 14 different subunits. Subunits NuoA, H, J, K, L, M, N constitute the membrane sector of the complex.

It localises to the cell inner membrane. It carries out the reaction a quinone + NADH + 5 H(+)(in) = a quinol + NAD(+) + 4 H(+)(out). Its function is as follows. NDH-1 shuttles electrons from NADH, via FMN and iron-sulfur (Fe-S) centers, to quinones in the respiratory chain. The immediate electron acceptor for the enzyme in this species is believed to be ubiquinone. Couples the redox reaction to proton translocation (for every two electrons transferred, four hydrogen ions are translocated across the cytoplasmic membrane), and thus conserves the redox energy in a proton gradient. This Cupriavidus pinatubonensis (strain JMP 134 / LMG 1197) (Cupriavidus necator (strain JMP 134)) protein is NADH-quinone oxidoreductase subunit K.